The primary structure comprises 133 residues: Adenosine 5'-monophosphoramidase hnt1 (133 aa).

The 104-residue stretch at 4–107 folds into the HIT domain; it reads IFCKIVKGDI…IPKPNEEYGL (104 aa). Residues 29–30, N81, 87–89, and 94–96 contribute to the AMP site; these read DI, HQF, and HFH. Residues 92-96 carry the Histidine triad motif motif; the sequence is HVHFH. H94 (tele-AMP-histidine intermediate) is an active-site residue.

It belongs to the HINT family. As to quaternary structure, homodimer. Mg(2+) is required as a cofactor.

It localises to the nucleus. The catalysed reaction is adenosine 5'-phosphoramidate + H2O = AMP + NH4(+). In terms of biological role, hydrolyzes adenosine 5'-monophosphoramidate substrates such as AMP-morpholidate, AMP-N-alanine methyl ester, AMP-alpha-acetyl lysine methyl ester and AMP-NH2. This chain is Adenosine 5'-monophosphoramidase hnt1 (hnt1), found in Schizosaccharomyces pombe (strain 972 / ATCC 24843) (Fission yeast).